The following is a 79-amino-acid chain: Succinate dehydrogenase assembly factor 1, mitochondrial (79 aa).

It belongs to the complex I LYR family. SDHAF1 subfamily. As to quaternary structure, interacts with SDH2 within an SDH1-SDH2 subcomplex.

The protein resides in the mitochondrion matrix. Functionally, plays an essential role in the assembly of succinate dehydrogenase (SDH), an enzyme complex (also referred to as respiratory complex II) that is a component of both the tricarboxylic acid (TCA) cycle and the mitochondrial electron transport chain, and which couples the oxidation of succinate to fumarate with the reduction of ubiquinone (coenzyme Q) to ubiquinol. Promotes maturation of the iron-sulfur protein subunit SDH2 of the SDH catalytic dimer, protecting it from the deleterious effects of oxidants. Acts together with SDHAF3 (SDH7). In Saccharomyces cerevisiae (strain YJM789) (Baker's yeast), this protein is Succinate dehydrogenase assembly factor 1, mitochondrial.